The following is a 514-amino-acid chain: Ankyrin repeat domain-containing protein 34B (514 aa).

ANK repeat units lie at residues 9-38 (SEGNSLIKAVHQSRLRLTRLLLEGGAYINE), 42-79 (RGETPLMIACKTKHVDHQSVSKAKMVKYLLENNADPNI), 83-113 (SGKTALMHACLEKAGPEVVSLLLKSGADLSL), and 117-146 (SSYSALVYAINSEDTETLKVLLSACKAKGK). The interval 220-249 (NDDTWDPGSPVRKPALAPKGPKLPHAPPWV) is disordered. Position 263 is a phosphoserine (Ser263). Phosphothreonine is present on Thr272. The residue at position 296 (Ser296) is a Phosphoserine.

This sequence belongs to the ANKRD34 family. Phosphorylated.

It is found in the cytoplasm. The protein localises to the nucleus. The sequence is that of Ankyrin repeat domain-containing protein 34B (ANKRD34B) from Homo sapiens (Human).